Consider the following 124-residue polypeptide: Seripauperin-3 (124 aa).

A helical transmembrane segment spans residues 7–24 (IAAGVAAIAAGIAAAPAT).

It belongs to the SRP1/TIP1 family. Seripauperin subfamily.

Its subcellular location is the membrane. This Saccharomyces cerevisiae (strain ATCC 204508 / S288c) (Baker's yeast) protein is Seripauperin-3 (PAU3).